Here is a 395-residue protein sequence, read N- to C-terminus: S-adenosylmethionine synthase (395 aa).

His14 is an ATP binding site. Asp16 provides a ligand contact to Mg(2+). Glu42 provides a ligand contact to K(+). The L-methionine site is built by Glu55 and Gln98. The segment at 98 to 108 (QSPDIALGVDK) is flexible loop. ATP contacts are provided by residues 174 to 176 (DGK), 240 to 241 (RF), Asp249, 255 to 256 (RK), Ala272, and Lys276. An L-methionine-binding site is contributed by Asp249. Lys280 serves as a coordination point for L-methionine.

The protein belongs to the AdoMet synthase family. Homotetramer; dimer of dimers. Mg(2+) serves as cofactor. Requires K(+) as cofactor.

The protein resides in the cytoplasm. It catalyses the reaction L-methionine + ATP + H2O = S-adenosyl-L-methionine + phosphate + diphosphate. It functions in the pathway amino-acid biosynthesis; S-adenosyl-L-methionine biosynthesis; S-adenosyl-L-methionine from L-methionine: step 1/1. Catalyzes the formation of S-adenosylmethionine (AdoMet) from methionine and ATP. The overall synthetic reaction is composed of two sequential steps, AdoMet formation and the subsequent tripolyphosphate hydrolysis which occurs prior to release of AdoMet from the enzyme. The protein is S-adenosylmethionine synthase of Thermotoga maritima (strain ATCC 43589 / DSM 3109 / JCM 10099 / NBRC 100826 / MSB8).